Here is a 252-residue protein sequence, read N- to C-terminus: 2-succinyl-6-hydroxy-2,4-cyclohexadiene-1-carboxylate synthase (252 aa).

It belongs to the AB hydrolase superfamily. MenH family. Monomer.

It carries out the reaction 5-enolpyruvoyl-6-hydroxy-2-succinyl-cyclohex-3-ene-1-carboxylate = (1R,6R)-6-hydroxy-2-succinyl-cyclohexa-2,4-diene-1-carboxylate + pyruvate. Its pathway is quinol/quinone metabolism; 1,4-dihydroxy-2-naphthoate biosynthesis; 1,4-dihydroxy-2-naphthoate from chorismate: step 3/7. It functions in the pathway quinol/quinone metabolism; menaquinone biosynthesis. In terms of biological role, catalyzes a proton abstraction reaction that results in 2,5-elimination of pyruvate from 2-succinyl-5-enolpyruvyl-6-hydroxy-3-cyclohexene-1-carboxylate (SEPHCHC) and the formation of 2-succinyl-6-hydroxy-2,4-cyclohexadiene-1-carboxylate (SHCHC). The polypeptide is 2-succinyl-6-hydroxy-2,4-cyclohexadiene-1-carboxylate synthase (Escherichia coli (strain ATCC 8739 / DSM 1576 / NBRC 3972 / NCIMB 8545 / WDCM 00012 / Crooks)).